We begin with the raw amino-acid sequence, 378 residues long: Gibberellin 20 oxidase 2 (378 aa).

Residues 1–10 (MAILCTTTSP) are compositionally biased toward polar residues. The disordered stretch occupies residues 1–26 (MAILCTTTSPAEKEHEPKQDLEKDQT). Residues 11-25 (AEKEHEPKQDLEKDQ) are compositionally biased toward basic and acidic residues. A Fe2OG dioxygenase domain is found at 220–320 (ENDSIMRLNH…RKSMAFFLCP (101 aa)). Residues histidine 245, aspartate 247, and histidine 301 each contribute to the Fe cation site. Arginine 311 is an active-site residue.

Belongs to the iron/ascorbate-dependent oxidoreductase family. GA20OX subfamily. It depends on Fe(2+) as a cofactor. L-ascorbate serves as cofactor. As to expression, expressed in inflorescence and developing siliques. Detected in seeds, roots, cotyledons and leaves. In seeds, specifically detected at the rim of the embryo and the outer integument.

The catalysed reaction is gibberellin A12 + 2 2-oxoglutarate + 3 O2 + H(+) = gibberellin A9 + 2 succinate + 3 CO2 + 2 H2O. It carries out the reaction gibberellin A12 + 2-oxoglutarate + O2 = gibberellin A15 + succinate + CO2. The enzyme catalyses gibberellin A15 + 2-oxoglutarate + O2 = gibberellin A24 + succinate + CO2 + H2O. It catalyses the reaction gibberellin A53 + 2-oxoglutarate + O2 = gibberellin A44 + succinate + CO2. The catalysed reaction is gibberellin A12 + 3 2-oxoglutarate + 3 O2 = gibberellin A25 + 3 succinate + 3 CO2 + H2O + H(+). Its pathway is plant hormone biosynthesis; gibberellin biosynthesis. In terms of biological role, key oxidase enzyme in the biosynthesis of gibberellin that catalyzes the conversion of GA12 to GA9, via a three-step oxidation at C-20 of the GA skeleton, and GA25 is also formed as a minor product. GA53 is less effectively oxidized than GA12 and is only oxidized one step to GA44. Involved in the promotion of the floral transition, fertility and silique elongation, but plays only a minor role in elongation of seedling organs. Acts redundantly with GA20OX1. In Arabidopsis thaliana (Mouse-ear cress), this protein is Gibberellin 20 oxidase 2 (GA20OX2).